A 233-amino-acid polypeptide reads, in one-letter code: C-type lectin domain family 2 member D6 (233 aa).

The disordered stretch occupies residues 1-45 (MPSSAHLQDSPPLLSRTLTQNEGQTSLRQSSSCGPSATSASESLS). The Cytoplasmic segment spans residues 1 to 73 (MPSSAHLQDS…GIILPESPAK (73 aa)). Residues 16–29 (RTLTQNEGQTSLRQ) show a composition bias toward polar residues. The segment covering 30 to 43 (SSSCGPSATSASES) has biased composition (low complexity). Residues 74 to 94 (LLCCCAVIVVLSVAVVALSVA) form a helical; Signal-anchor for type II membrane protein membrane-spanning segment. At 95-233 (LSVKKTPQIS…KLNSYTSQCQ (139 aa)) the chain is on the extracellular side. One can recognise a C-type lectin domain in the interval 119–230 (VGNKCYYFNE…ICSKLNSYTS (112 aa)). A glycan (N-linked (GlcNAc...) asparagine) is linked at asparagine 132.

It is found in the cell membrane. In terms of biological role, lectin-type cell surface receptor. The chain is C-type lectin domain family 2 member D6 (Clec2d6) from Rattus norvegicus (Rat).